Reading from the N-terminus, the 301-residue chain is Aquaporin NIP2-3 (301 aa).

The next 2 helical transmembrane spans lie at 57–77 and 91–111; these read VISE…AASI and SVAG…ISGA. The NPA 1 motif lies at 114 to 116; the sequence is NPA. 3 consecutive transmembrane segments (helical) span residues 132-154, 172-192, and 200-220; these read VPFY…KAVL, ALAI…AVAT, and LAGL…GPVS. Positions 225 to 227 match the NPA 2 motif; the sequence is NPA. A helical transmembrane segment spans residues 238–258; it reads VFTGLWIYFLGPVVGTLSGAW.

The protein belongs to the MIP/aquaporin (TC 1.A.8) family. NIP (TC 1.A.8.12) subfamily.

The protein localises to the membrane. Functionally, aquaporins facilitate the transport of water and small neutral solutes across cell membranes. This Zea mays (Maize) protein is Aquaporin NIP2-3 (NIP2-3).